The chain runs to 1181 residues: Integrin alpha-2 (1181 aa).

A signal peptide spans 1–29 (MGPERTGAAPLPLLLVLALSQGILNCCLA). Over 30 to 1132 (YNVGLPEAKI…KPDEKAEVPT (1103 aa)) the chain is Extracellular. 2 FG-GAP repeats span residues 34–92 (LPEA…TATC) and 101–161 (TSIP…LSAS). The cysteines at positions 83 and 92 are disulfide-linked. Residues N105, N112, and N343 are each glycosylated (N-linked (GlcNAc...) asparagine). One can recognise a VWFA domain in the interval 188–365 (WDAVKNFLEK…TLGEQIFSIE (178 aa)). FG-GAP repeat units follow at residues 366 to 420 (GTVQ…LIFP), 423 to 475 (AFDQ…ENGN), 477 to 539 (TVIQ…ILGQ), 540 to 598 (HQFL…TIRT), and 602 to 664 (QKIL…FTPE). Residues N432, N460, and N475 are each glycosylated (N-linked (GlcNAc...) asparagine). 12 residues coordinate Ca(2+): D499, D501, D503, D507, D563, N565, D567, D571, D627, N629, D631, and D635. 5 disulfide bridges follow: C680/C737, C789/C795, C865/C876, C1019/C1050, and C1055/C1060. N699 carries an N-linked (GlcNAc...) asparagine glycan. N-linked (GlcNAc...) asparagine glycans are attached at residues N1057, N1074, and N1081. The chain crosses the membrane as a helical span at residues 1133–1154 (GVIIGSIIAGILLLLALVAILW). The interaction with HPS5 stretch occupies residues 1155-1161 (KLGFFKR). The Cytoplasmic portion of the chain corresponds to 1155–1181 (KLGFFKRKYEKMTKNPDEIDETTELSS). Residues 1157-1161 (GFFKR) carry the GFFKR motif motif.

This sequence belongs to the integrin alpha chain family. In terms of assembly, heterodimer of an alpha and a beta subunit. Alpha-2 associates with beta-1. Interacts with HPS5 and RAB21. (Microbial infection) Integrin ITGA2:ITGB1 interacts (via ITAG2 I-domain) with rotavirus A VP4 protein. As to quaternary structure, (Microbial infection) Integrin ITGA2:ITGB1 interacts with human echoviruses 1 and 8 capsid proteins.

The protein localises to the membrane. Functionally, integrin alpha-2/beta-1 is a receptor for laminin, collagen, collagen C-propeptides, fibronectin and E-cadherin. It recognizes the proline-hydroxylated sequence G-F-P-G-E-R in collagen. It is responsible for adhesion of platelets and other cells to collagens, modulation of collagen and collagenase gene expression, force generation and organization of newly synthesized extracellular matrix. In terms of biological role, (Microbial infection) Integrin ITGA2:ITGB1 acts as a receptor for Human rotavirus A. (Microbial infection) Integrin ITGA2:ITGB1 acts as a receptor for Human echoviruses 1 and 8. The chain is Integrin alpha-2 (ITGA2) from Homo sapiens (Human).